The chain runs to 508 residues: Acetyl-coenzyme A carboxylase carboxyl transferase subunit beta, chloroplastic (508 aa).

Disordered stretches follow at residues Pro-30–Gly-51 and Asn-173–His-234. Positions Ser-35–Lys-47 are enriched in basic and acidic residues. Over residues Asn-173–Glu-219 the composition is skewed to low complexity. A compositionally biased stretch (polar residues) spans Asp-220–His-234. The region spanning Leu-244–Asn-508 is the CoA carboxyltransferase N-terminal domain. Residues Cys-248, Cys-251, Cys-267, and Cys-270 each contribute to the Zn(2+) site. The C4-type zinc finger occupies Cys-248 to Cys-270.

It belongs to the AccD/PCCB family. As to quaternary structure, acetyl-CoA carboxylase is a heterohexamer composed of biotin carboxyl carrier protein, biotin carboxylase and 2 subunits each of ACCase subunit alpha and ACCase plastid-coded subunit beta (accD). Zn(2+) is required as a cofactor.

It is found in the plastid. Its subcellular location is the chloroplast stroma. It carries out the reaction N(6)-carboxybiotinyl-L-lysyl-[protein] + acetyl-CoA = N(6)-biotinyl-L-lysyl-[protein] + malonyl-CoA. It participates in lipid metabolism; malonyl-CoA biosynthesis; malonyl-CoA from acetyl-CoA: step 1/1. Component of the acetyl coenzyme A carboxylase (ACC) complex. Biotin carboxylase (BC) catalyzes the carboxylation of biotin on its carrier protein (BCCP) and then the CO(2) group is transferred by the transcarboxylase to acetyl-CoA to form malonyl-CoA. This Lactuca sativa (Garden lettuce) protein is Acetyl-coenzyme A carboxylase carboxyl transferase subunit beta, chloroplastic.